The sequence spans 505 residues: Zinc finger protein 649 (505 aa).

Residues 8–79 (LTLEDVAVDF…EDEIHSPAHP (72 aa)) form the KRAB domain. Residue Lys-112 forms a Glycyl lysine isopeptide (Lys-Gly) (interchain with G-Cter in SUMO2) linkage. C2H2-type zinc fingers lie at residues 178 to 200 (HECTDCGKAFLKKSQLTEHKRIH), 206 to 228 (HVCSLCGKAFYKKYRLTEHERAH), 234 to 256 (HGCSLCGKAFYKRYRLTEHERAH), 262 to 284 (YGCSECGKAFPRKSELTEHQRIH), 290 to 312 (HQCSECGRAFSRKSLLVVHQRTH), 318 to 340 (HTCSECGKGFIQKGNLNIHQRTH), 346 to 368 (YGCIDCGKAFSQKSCLVAHQRYH), 374 to 396 (FVCPECGQPCSQKSGLIRHQKIH), 402 to 424 (YKCSDCGKAFLTKTMLIVHHRTH), and 430 to 452 (YGCDECEKAYFYMSCLVKHKRIH). Residues 455 to 481 (EKRGDSVKVENPSTASHSLSPSEHVQG) form a disordered region. Residues 465-477 (NPSTASHSLSPSE) are compositionally biased toward polar residues.

This sequence belongs to the krueppel C2H2-type zinc-finger protein family. Highly expressed in heart, skeletal muscle, and brain. Lower expression in liver, lung, kidney, pancreas and placenta.

Its subcellular location is the nucleus. In terms of biological role, transcriptional repressor. Regulator of transcriptional factor complexes and may suppress SRE and AP-1 transcription activities mediated by growth factor signaling pathways. This Homo sapiens (Human) protein is Zinc finger protein 649 (ZNF649).